We begin with the raw amino-acid sequence, 246 residues long: ATP synthase subunit a, chloroplastic (246 aa).

5 helical membrane-spanning segments follow: residues 35-55 (GQVL…GLIA), 94-114 (VPFI…GALL), 132-152 (DINT…YAGI), 198-218 (LVVG…VMLL), and 219-239 (GVFT…AYIG).

The protein belongs to the ATPase A chain family. In terms of assembly, F-type ATPases have 2 components, CF(1) - the catalytic core - and CF(0) - the membrane proton channel. CF(1) has five subunits: alpha(3), beta(3), gamma(1), delta(1), epsilon(1). CF(0) has four main subunits: a, b, b' and c.

Its subcellular location is the plastid. The protein resides in the chloroplast thylakoid membrane. In terms of biological role, key component of the proton channel; it plays a direct role in the translocation of protons across the membrane. This is ATP synthase subunit a, chloroplastic from Stigeoclonium helveticum (Green alga).